Consider the following 629-residue polypeptide: Polyadenylate-binding protein 2 (629 aa).

The span at 1–12 shows a compositional bias: polar residues; the sequence is MAQVQLQGQTPN. Residues 1–25 form a disordered region; that stretch reads MAQVQLQGQTPNGSTAAVTSAPATS. Positions 13–25 are enriched in low complexity; that stretch reads GSTAAVTSAPATS. 4 consecutive RRM domains span residues 36–114, 124–201, 215–292, and 318–395; these read TSLY…YSHR, GNIF…PFLR, TNVY…RAQK, and SNLY…IAQR. Residues 480 to 507 form a disordered region; the sequence is PQQQRPGGGRRPGGIQHSQQQNPMMQQQ. Residues 492-507 are compositionally biased toward low complexity; the sequence is GGIQHSQQQNPMMQQQ. One can recognise a PABC domain in the interval 539–616; it reads TIGALASNLS…AMDVLRSVAA (78 aa).

Belongs to the polyadenylate-binding protein type-1 family. In terms of assembly, interacts with eIF-iso4G. Interacts with ERD15/CID1 and CID7. Interacts with Turnip mosaic virus (TuMV) VPg-Pro and RNA-dependent RNA polymerase (RdRp). In terms of tissue distribution, expressed in all organs (at the protein level) but under distinct spatial and temporal regulation within each organ.

It localises to the cytoplasm. It is found in the nucleus. Functionally, binds the poly(A) tail of mRNA. Appears to be an important mediator of the multiple roles of the poly(A) tail in mRNA biogenesis, stability and translation. In the cytoplasm, affects both translation and mRNA decay. Stimulates translation by interaction with translation initiation factor eIF4G, a subunit of the cap-binding complex eIF4F, bringing the 5'- and 3'-ends of the mRNA in proximity. The formation of this circular mRNP structure appears to be critical for the synergistic effects of the cap and the poly(A) tail in facilitating translation initiation, recycling of ribosomes, and mRNA stability. During infection with potyvirus TuMV, acts as a potential integral component of the viral replicase complex that could play an important role in the regulation of potyviral RNA-dependent RNA polymerase (RdRp). Binds to uridylated mRNAs and determines the size of uridine extensions. Limits uridine extension by URT1, likely by binding to the oligo(A) tail and preventing URT1 access. This chain is Polyadenylate-binding protein 2 (PAB2), found in Arabidopsis thaliana (Mouse-ear cress).